A 270-amino-acid polypeptide reads, in one-letter code: dTDP-6-deoxy-L-talose 4-dehydrogenase (NAD(+)) (270 aa).

Residues 11–12, 50–51, 72–76, Asn87, Thr112, Tyr135, and Lys139 contribute to the NAD(+) site; these read YI, DI, and LAWQA. 2 residues coordinate substrate: Thr112 and Tyr135. Tyr135 (proton acceptor) is an active-site residue.

The protein belongs to the NAD(P)-dependent epimerase/dehydratase family.

It catalyses the reaction dTDP-6-deoxy-beta-L-talose + NAD(+) = dTDP-4-dehydro-beta-L-rhamnose + NADH + H(+). It participates in bacterial outer membrane biogenesis; LPS O-antigen biosynthesis. Catalyzes the reduction of dTDP-6-deoxy-L-lyxo-4-hexulose to dTDP-6-deoxy-L-talose. The sequence is that of dTDP-6-deoxy-L-talose 4-dehydrogenase (NAD(+)) (tll) from Aggregatibacter actinomycetemcomitans (Actinobacillus actinomycetemcomitans).